A 314-amino-acid chain; its full sequence is Methionyl-tRNA formyltransferase (314 aa).

112–115 contributes to the (6S)-5,6,7,8-tetrahydrofolate binding site; sequence SLLP.

This sequence belongs to the Fmt family.

The catalysed reaction is L-methionyl-tRNA(fMet) + (6R)-10-formyltetrahydrofolate = N-formyl-L-methionyl-tRNA(fMet) + (6S)-5,6,7,8-tetrahydrofolate + H(+). Functionally, attaches a formyl group to the free amino group of methionyl-tRNA(fMet). The formyl group appears to play a dual role in the initiator identity of N-formylmethionyl-tRNA by promoting its recognition by IF2 and preventing the misappropriation of this tRNA by the elongation apparatus. The polypeptide is Methionyl-tRNA formyltransferase (Aeromonas hydrophila subsp. hydrophila (strain ATCC 7966 / DSM 30187 / BCRC 13018 / CCUG 14551 / JCM 1027 / KCTC 2358 / NCIMB 9240 / NCTC 8049)).